Here is a 215-residue protein sequence, read N- to C-terminus: Large ribosomal subunit protein uL4 (215 aa).

A disordered region spans residues 43–101 (HQRQGTSKTKERGEVRGSGRKLYRQKGTGNARVGDAQSPIRRGGGRAHGARPRDYAHDL). Over residues 50 to 59 (KTKERGEVRG) the composition is skewed to basic and acidic residues.

It belongs to the universal ribosomal protein uL4 family. Part of the 50S ribosomal subunit.

Functionally, one of the primary rRNA binding proteins, this protein initially binds near the 5'-end of the 23S rRNA. It is important during the early stages of 50S assembly. It makes multiple contacts with different domains of the 23S rRNA in the assembled 50S subunit and ribosome. Its function is as follows. Forms part of the polypeptide exit tunnel. The polypeptide is Large ribosomal subunit protein uL4 (Salinibacter ruber (strain DSM 13855 / M31)).